Consider the following 340-residue polypeptide: Probable D,D-dipeptide transport system permease protein DdpB (340 aa).

The Periplasmic segment spans residues 1–11 (MTFWSILRQRC). A helical transmembrane segment spans residues 12–32 (WGLVLVVAGVCVITFIISHLI). At 33 to 104 (PGDPARLLAG…IFFPATLELA (72 aa)) the chain is on the cytoplasmic side. The ABC transmembrane type-1 domain maps to 97–327 (FPATLELAFG…LVNLVVDLLY (231 aa)). Residues 105 to 125 (FGALLLALLIGIPLGILSAVW) form a helical membrane-spanning segment. Topologically, residues 126-135 (RNRWLDHLVR) are periplasmic. A helical transmembrane segment spans residues 136–156 (IMAITGISTPAFWLGLGVIVL). At 157 to 199 (FYGHLQILPGGGRLDDWLDPPTHVTGFYLLDALLEGNGEVFFN) the chain is on the cytoplasmic side. A helical transmembrane segment spans residues 200–220 (ALQHLILPALTLAFVHLGIVA). Over 221-246 (RQIRSAMLEQLSEDYIRTARASGLPG) the chain is Periplasmic. Residues 247-269 (WYIVLCYALPNALIPSITVLGLA) traverse the membrane as a helical segment. Topologically, residues 270 to 279 (LGDLLYGAVL) are cytoplasmic. The chain crosses the membrane as a helical span at residues 280 to 300 (TETVFAWPGMGAWVVTSIQAL). Residue Asp-301 is a topological domain, periplasmic. Residues 302–322 (FPAVMGFAVVVSFAYVLVNLV) traverse the membrane as a helical segment. Residues 323–340 (VDLLYLWIDPRIGRGGGE) are Cytoplasmic-facing.

It belongs to the binding-protein-dependent transport system permease family. OppBC subfamily. In terms of assembly, the complex is composed of two ATP-binding proteins (DdpD and DdpF), two transmembrane proteins (DdpB and DdpC) and a solute-binding protein (DdpA).

The protein resides in the cell inner membrane. Part of the ABC transporter complex DdpABCDF, which is probably involved in D,D-dipeptide transport. Probably responsible for the translocation of the substrate across the membrane. This Escherichia coli (strain K12) protein is Probable D,D-dipeptide transport system permease protein DdpB (ddpB).